The primary structure comprises 198 residues: CASP-like protein 1U1 (198 aa).

The Cytoplasmic segment spans residues 1–30; that stretch reads MSDTPVVVIPRKGYVDGHHGYHHSYHSGLN. The chain crosses the membrane as a helical span at residues 31–51; it reads LLLRLLQAFATAAAVIVMLLA. The Extracellular portion of the chain corresponds to 52-73; it reads TQTEFTRYGEVRGRWRDYPAYK. A helical transmembrane segment spans residues 74 to 94; it reads WFIIANAVVFVYALLATLVAC. At 95–117 the chain is on the cytoplasmic side; sequence CALIARRGPLSYSPSAWLTFLLD. Residues 118 to 138 traverse the membrane as a helical segment; the sequence is FVAASALMSAASAALAVALIA. Topologically, residues 139 to 165 are extracellular; that stretch reads RNGQNLQGQHYWPTFCNYVTRFCDYAQ. Residues 166–186 traverse the membrane as a helical segment; sequence GAIIASFCGFGLLALSTLLAA. Residues 187–198 are Cytoplasmic-facing; it reads SALHHLAWHRLH.

This sequence belongs to the Casparian strip membrane proteins (CASP) family. As to quaternary structure, homodimer and heterodimers.

The protein localises to the cell membrane. The sequence is that of CASP-like protein 1U1 from Physcomitrium patens (Spreading-leaved earth moss).